Reading from the N-terminus, the 348-residue chain is Rhodopsin (348 aa).

The Extracellular portion of the chain corresponds to 1–33 (TEGPFFYIPMVNTSGVVRSPYEYPQYYLVNPAA). N12 is a glycosylation site (N-linked (GlcNAc...) asparagine). A helical transmembrane segment spans residues 34–58 (YAILGAYMFFLIIIGFPVNFMTLYV). Residues 59–70 (TLEHKKLRTPLN) lie on the Cytoplasmic side of the membrane. Residues 71-93 (YILLNLAVADLFMVIGGFTTTMY) form a helical membrane-spanning segment. At 94-107 (SSMHGYFVLGRLGC) the chain is on the extracellular side. A disulfide bridge links C107 with C184. The helical transmembrane segment at 108–130 (NMEGFSATLGGMISLWSLAVLAI) threads the bilayer. Residues 131–133 (ERW) carry the 'Ionic lock' involved in activated form stabilization motif. Over 131-149 (ERWVVVCKPISNFRFGENH) the chain is Cytoplasmic. The helical transmembrane segment at 150–170 (AIMGVSLTWFMALACTVPPLV) threads the bilayer. Residues 171-199 (GWSRYIPEGMQCSCGIDYYTRAEGFNNES) are Extracellular-facing. N-linked (GlcNAc...) asparagine glycosylation occurs at N197. The chain crosses the membrane as a helical span at residues 200–221 (FVLYMFFCHFLVPLVIIFFCYG). Residues 222–249 (RLLCAVKEAAAAQQESETTQRAEREVTR) lie on the Cytoplasmic side of the membrane. A helical membrane pass occupies residues 250–271 (MVIIMVIGFLVCWLPYASVAWF). The Extracellular portion of the chain corresponds to 272–283 (IFTHQGSEFGPL). A helical transmembrane segment spans residues 284-305 (FMTIPAFFAKSSSIYNPMIYIC). K293 is subject to N6-(retinylidene)lysine. The Cytoplasmic segment spans residues 306-348 (MNKQFRNCMITTLFCGKNPFEGEEEGASSTKTEASSASSVSPA). Residue C320 is the site of S-palmitoyl cysteine attachment. The segment at 327–348 (GEEEGASSTKTEASSASSVSPA) is disordered. The segment covering 332 to 348 (ASSTKTEASSASSVSPA) has biased composition (low complexity).

Belongs to the G-protein coupled receptor 1 family. Opsin subfamily. Phosphorylated on some or all of the serine and threonine residues present in the C-terminal region. In terms of processing, contains one covalently linked retinal chromophore.

It localises to the membrane. Its subcellular location is the cell projection. The protein localises to the cilium. It is found in the photoreceptor outer segment. Photoreceptor required for image-forming vision at low light intensity. While most salt water fish species use retinal as chromophore, most freshwater fish use 3-dehydroretinal, or a mixture of retinal and 3-dehydroretinal. Light-induced isomerization of 11-cis to all-trans retinal triggers a conformational change that activates signaling via G-proteins. Subsequent receptor phosphorylation mediates displacement of the bound G-protein alpha subunit by arrestin and terminates signaling. In Sargocentron punctatissimum (Speckled squirrelfish), this protein is Rhodopsin (rho).